Reading from the N-terminus, the 475-residue chain is MAILQNSRQSHKQLPIISQTIRSAWCQQRPINAMHQDVRQKSIGSGNETKLEAKETEVPTNRRRRRRRCSSSSTSDSSASSYSSTDSDSGSSTSSSSIRSQLPALNLPVPLPLATPTPPAVSSPHQAPSPRRNSSDSNRSVSPVEVPVDPHAWTPEDIASWVRWATRKFKLDPEPDIDRFPKDAQELCDLSRADFWVCAGSRRGGMLLAQHFAISLYHATGRETSPMLNDDEPNPYQLLNAASHRLVAQGSGGQIQLWQFLLELLADSSNANAISWEGQSGEFRLIDPDEVARRWGERKAKPNMNYDKLSRALRYYYDKNIMTKVHGKRYAYKFDFHGLMAACQAQAQGGDPASSMLGSYNHHAGGAMQLGRHPPPLHHHPQHSHPHHQLGQPHFLHPHHSSPASNSSSLGFPSSSTASSQASPGQAPASSSASTSNFTAPFQGGTAGVDPARTSTSSAGNYDQGPVTPTTNAFN.

Positions 42-150 are disordered; that stretch reads SIGSGNETKL…VSPVEVPVDP (109 aa). Over residues 70–108 the composition is skewed to low complexity; sequence SSSSTSDSSASSYSSTDSDSGSSTSSSSIRSQLPALNLP. Positions 109 to 121 are enriched in pro residues; it reads VPLPLATPTPPAV. The span at 122–144 shows a compositional bias: low complexity; that stretch reads SSPHQAPSPRRNSSDSNRSVSPV. Residues 132-219 form the PNT domain; it reads RNSSDSNRSV…QHFAISLYHA (88 aa). Residues 255–335 constitute a DNA-binding region (ETS); that stretch reads IQLWQFLLEL…HGKRYAYKFD (81 aa). The interval 350-475 is disordered; that stretch reads GDPASSMLGS…PVTPTTNAFN (126 aa). A compositionally biased stretch (basic residues) spans 375–388; that stretch reads PPLHHHPQHSHPHH. Residues 401 to 436 show a composition bias toward low complexity; it reads SSPASNSSSLGFPSSSTASSQASPGQAPASSSASTS. Over residues 453-475 the composition is skewed to polar residues; the sequence is RTSTSSAGNYDQGPVTPTTNAFN.

The protein belongs to the ETS family. In terms of tissue distribution, embryonic ventral nervous system and 1 pair of neurons in each thoracic segment.

The protein localises to the nucleus. In Drosophila melanogaster (Fruit fly), this protein is DNA-binding protein D-ETS-6 (Ets21C).